The sequence spans 589 residues: uncharacterized protein (589 aa).

The next 14 membrane-spanning stretches (helical) occupy residues 90 to 110 (YIVIPGLMLSIFLAALDQTVI), 128 to 148 (SWIGTAYSLAETSILPFCGIM), 162 to 182 (IVLFLFGSAMCGAAQNMLWLV), 189 to 209 (GIGGGGIMSLVTIVIADITPL), 217 to 237 (GCMGVTWGVASVMGPLIGGAI), 245 to 265 (WIFFINLPTGGLSLALLIFFL), 284 to 304 (FVGIVTITTGVVLFLLGLNIG), 311 to 331 (AHANVLCYLIFGILCIAGFVV), 355 to 375 (VMVTSFLHYYIMSTVTYYIPI), 390 to 410 (VHTLSLAVVSSVVSAISGMGI), 418 to 438 (YPMIGGWIVLLAGTGSMIAIY), 448 to 468 (GFLALTAVGIGNLFQPNLIAI), 483 to 503 (AFMLLRNMGASVGISIGAVIY), and 545 to 565 (IRTIWIVNCPVAGVGMLLSFF).

It belongs to the major facilitator superfamily. TCR/Tet family.

The protein localises to the membrane. This is an uncharacterized protein from Schizosaccharomyces pombe (strain 972 / ATCC 24843) (Fission yeast).